The sequence spans 201 residues: MLLPWLNEELIEAGCDEAGRGCLAGAVYAAAVILPKDFENELLNDSKQLSEKQRYALREVIERDAVAWAVGIVSPEEIDKINILNASFLAMHRAVDRLKTRPQHLLIDGNRFKKYPDIPHTTVIKGDGKYLSIAAASILAKTYRDDYMNRLHQEFPCYDWEHNKGYPTKKHRAAIAGHGTTPYHRMTFNLLGDGQLELFSK.

Residues 10 to 200 (LIEAGCDEAG…LGDGQLELFS (191 aa)) enclose the RNase H type-2 domain. 3 residues coordinate a divalent metal cation: D16, E17, and D108.

This sequence belongs to the RNase HII family. The cofactor is Mn(2+). Mg(2+) serves as cofactor.

It is found in the cytoplasm. The catalysed reaction is Endonucleolytic cleavage to 5'-phosphomonoester.. Its function is as follows. Endonuclease that specifically degrades the RNA of RNA-DNA hybrids. In Bacteroides fragilis (strain YCH46), this protein is Ribonuclease HII.